The sequence spans 388 residues: L-lactate dehydrogenase (388 aa).

In terms of domain architecture, FMN hydroxy acid dehydrogenase spans 1-380; the sequence is MIISAASDYR…SADALSRVTR (380 aa). A substrate-binding site is contributed by tyrosine 24. Residues serine 106 and glutamine 127 each coordinate FMN. Tyrosine 129 lines the substrate pocket. Residue threonine 155 participates in FMN binding. Arginine 164 provides a ligand contact to substrate. Lysine 251 contacts FMN. Histidine 275 serves as the catalytic Proton acceptor. Residue arginine 278 participates in substrate binding. 306–330 provides a ligand contact to FMN; that stretch reads DSGIRSGLDVVRMLALGADAVLLGR.

The protein belongs to the FMN-dependent alpha-hydroxy acid dehydrogenase family. Requires FMN as cofactor.

It localises to the cell inner membrane. It catalyses the reaction (S)-lactate + A = pyruvate + AH2. Catalyzes the conversion of L-lactate to pyruvate. Is coupled to the respiratory chain. In Xanthomonas euvesicatoria pv. vesicatoria (strain 85-10) (Xanthomonas campestris pv. vesicatoria), this protein is L-lactate dehydrogenase.